Reading from the N-terminus, the 487-residue chain is Beta-barrel assembly-enhancing protease (487 aa).

A signal peptide spans 1-27 (MFRQLKKNLVATLIAALALGQVAPAFA). Residue His-136 coordinates Zn(2+). The active site involves Glu-137. Residues His-140 and Glu-201 each coordinate Zn(2+). Asp-205 acts as the Proton donor in catalysis. 2 TPR repeats span residues 309–342 (HAAQYGRALQAMEASKYDEARKTLQPLLSAEPNN) and 427–460 (DQELAARAESYALAGRLDQAISLLSSASAQAKLG).

The protein belongs to the peptidase M48 family. BepA subfamily. Zn(2+) serves as cofactor.

Its subcellular location is the periplasm. Functions both as a chaperone and a metalloprotease. Maintains the integrity of the outer membrane by promoting either the assembly or the elimination of outer membrane proteins, depending on their folding state. In Salmonella typhi, this protein is Beta-barrel assembly-enhancing protease.